Consider the following 242-residue polypeptide: Segregation and condensation protein A (242 aa).

The protein belongs to the ScpA family. Component of a cohesin-like complex composed of ScpA, ScpB and the Smc homodimer, in which ScpA and ScpB bind to the head domain of Smc. The presence of the three proteins is required for the association of the complex with DNA.

The protein localises to the cytoplasm. Participates in chromosomal partition during cell division. May act via the formation of a condensin-like complex containing Smc and ScpB that pull DNA away from mid-cell into both cell halves. The chain is Segregation and condensation protein A from Streptococcus pneumoniae serotype 2 (strain D39 / NCTC 7466).